A 124-amino-acid chain; its full sequence is Small ribosomal subunit protein uS13 (124 aa).

A disordered region spans residues 95-124 (GLPVRGQRTKTNARTRKGPKRTIAGKKKAR).

Belongs to the universal ribosomal protein uS13 family. As to quaternary structure, part of the 30S ribosomal subunit. Forms a loose heterodimer with protein S19. Forms two bridges to the 50S subunit in the 70S ribosome.

In terms of biological role, located at the top of the head of the 30S subunit, it contacts several helices of the 16S rRNA. In the 70S ribosome it contacts the 23S rRNA (bridge B1a) and protein L5 of the 50S subunit (bridge B1b), connecting the 2 subunits; these bridges are implicated in subunit movement. Contacts the tRNAs in the A and P-sites. The polypeptide is Small ribosomal subunit protein uS13 (Mycobacteroides abscessus (strain ATCC 19977 / DSM 44196 / CCUG 20993 / CIP 104536 / JCM 13569 / NCTC 13031 / TMC 1543 / L948) (Mycobacterium abscessus)).